We begin with the raw amino-acid sequence, 388 residues long: Outer membrane protein assembly factor BamB (388 aa).

Positions 1–17 (MVLSLLSVMLLSGYKFL) are cleaved as a signal peptide.

The protein belongs to the BamB family. Part of the Bam complex, which is composed of the outer membrane protein BamA, and four lipoproteins BamB, BamC, BamD and BamE.

It localises to the cell outer membrane. In terms of biological role, part of the outer membrane protein assembly complex, which is involved in assembly and insertion of beta-barrel proteins into the outer membrane. This Moranella endobia (strain PCIT) protein is Outer membrane protein assembly factor BamB.